We begin with the raw amino-acid sequence, 361 residues long: 3-dehydroquinate synthase (361 aa).

NAD(+) is bound by residues 71-76 (DGEQNK), 105-109 (GVIGD), 129-130 (TT), Lys142, Lys151, and 169-172 (CLNT). The Zn(2+) site is built by Glu184, His247, and His264.

This sequence belongs to the sugar phosphate cyclases superfamily. Dehydroquinate synthase family. Co(2+) serves as cofactor. It depends on Zn(2+) as a cofactor. The cofactor is NAD(+).

The protein resides in the cytoplasm. The enzyme catalyses 7-phospho-2-dehydro-3-deoxy-D-arabino-heptonate = 3-dehydroquinate + phosphate. It functions in the pathway metabolic intermediate biosynthesis; chorismate biosynthesis; chorismate from D-erythrose 4-phosphate and phosphoenolpyruvate: step 2/7. Its function is as follows. Catalyzes the conversion of 3-deoxy-D-arabino-heptulosonate 7-phosphate (DAHP) to dehydroquinate (DHQ). This chain is 3-dehydroquinate synthase, found in Sodalis glossinidius (strain morsitans).